Here is a 352-residue protein sequence, read N- to C-terminus: RNA-binding protein lark (352 aa).

RRM domains are found at residues 7–77 (FKLF…AAKS) and 86–156 (TKIF…VSTS). The segment at 168–185 (EQCYRCGRSGHWSKECPR) adopts a CCHC-type zinc-finger fold. Disordered stretches follow at residues 187–228 (YGSA…LRDR) and 254–352 (YQTS…YAPY). Serine 198 and serine 201 each carry phosphoserine. Composition is skewed to pro residues over residues 214–224 (PYPPPPPPPPF) and 262–277 (FPPP…PLPP). Residues 279–288 (LSGSLRSCSV) show a composition bias toward polar residues. A phosphoserine mark is found at serine 315 and serine 325. Over residues 320–334 (GYEDFSRDAFDERMI) the composition is skewed to basic and acidic residues.

In terms of tissue distribution, expressed in the CNS and in CCAP neurons of the ventral nervous system (VNS), which control insect ecdysis.

The protein resides in the cytoplasm. It is found in the nucleus. Its function is as follows. Essential RNA-binding protein. May be required for circadian repression of eclosion. Also essential for nurse cell dumping during oogenesis, the process whereby the cytoplasmic contents of nurse cells are transferred to the oocyte late in it's development. The protein is RNA-binding protein lark (lark) of Drosophila melanogaster (Fruit fly).